A 191-amino-acid chain; its full sequence is Imidazoleglycerol-phosphate dehydratase (191 aa).

The protein belongs to the imidazoleglycerol-phosphate dehydratase family.

The protein localises to the cytoplasm. The enzyme catalyses D-erythro-1-(imidazol-4-yl)glycerol 3-phosphate = 3-(imidazol-4-yl)-2-oxopropyl phosphate + H2O. Its pathway is amino-acid biosynthesis; L-histidine biosynthesis; L-histidine from 5-phospho-alpha-D-ribose 1-diphosphate: step 6/9. The chain is Imidazoleglycerol-phosphate dehydratase from Methanococcoides burtonii (strain DSM 6242 / NBRC 107633 / OCM 468 / ACE-M).